Here is a 351-residue protein sequence, read N- to C-terminus: Secreted frizzled-related sequence protein 4 (351 aa).

The N-terminal stretch at Met1–Gly18 is a signal peptide. The region spanning Val19–Pro139 is the FZ domain. Intrachain disulfides connect Cys24–Cys85, Cys32–Cys78, Cys69–Cys108, Cys97–Cys136, and Cys101–Cys125. Asn38 and Asn68 each carry an N-linked (GlcNAc...) asparagine glycan. 3 N-linked (GlcNAc...) asparagine glycosylation sites follow: Asn116, Asn194, and Asn240. Residues Cys178–Ser306 form the NTR domain. Residues Glu293 to Gln303 show a composition bias toward basic and acidic residues. The segment at Glu293 to Ser351 is disordered. A compositionally biased stretch (low complexity) spans Ser306–Lys318. Basic residues predominate over residues Lys333–Ser351.

Belongs to the secreted frizzled-related protein (sFRP) family. Expressed in the ovary. Localized to granulosa cells of periovulatory follicles and corpora lutea. Weakly expressed in adult tissues including kidney, brain and lung.

It localises to the secreted. Soluble frizzled-related proteins (sFRPS) function as modulators of Wnt signaling through direct interaction with Wnts. They have a role in regulating cell growth and differentiation in specific cell types. SFRP4 plays a role in bone morphogenesis. May also act as a regulator of adult uterine morphology and function. May also increase apoptosis during ovulation possibly through modulation of FZ1/FZ4/WNT4 signaling. Has phosphaturic effects by specifically inhibiting sodium-dependent phosphate uptake. In Mus musculus (Mouse), this protein is Secreted frizzled-related sequence protein 4 (Sfrp4).